The chain runs to 580 residues: Threonine--tRNA ligase (580 aa).

The tract at residues 179–476 is catalytic; the sequence is DHRKIGKDLN…LLEQTKGILP (298 aa). Residues Cys-272, His-323, and His-453 each contribute to the Zn(2+) site.

Belongs to the class-II aminoacyl-tRNA synthetase family. As to quaternary structure, homodimer. Requires Zn(2+) as cofactor.

Its subcellular location is the cytoplasm. The enzyme catalyses tRNA(Thr) + L-threonine + ATP = L-threonyl-tRNA(Thr) + AMP + diphosphate + H(+). Catalyzes the attachment of threonine to tRNA(Thr) in a two-step reaction: L-threonine is first activated by ATP to form Thr-AMP and then transferred to the acceptor end of tRNA(Thr). Also edits incorrectly charged L-seryl-tRNA(Thr). The chain is Threonine--tRNA ligase from Ureaplasma parvum serovar 3 (strain ATCC 27815 / 27 / NCTC 11736).